The chain runs to 65 residues: MPKLKTRKAAAKRFKATVTGKFMRRRAFRNHLLDHKSPKLKRHLATKAVVDERDAENVRLMLPYA.

It belongs to the bacterial ribosomal protein bL35 family.

This chain is Large ribosomal subunit protein bL35, found in Prochlorococcus marinus (strain MIT 9313).